A 155-amino-acid polypeptide reads, in one-letter code: Ribonuclease H (155 aa).

The 143-residue stretch at 4–146 folds into the RNase H type-1 domain; sequence NIDVVEIYTD…CDRLATEQIK (143 aa). The Mg(2+) site is built by Asp-13, Glu-51, Asp-73, and Asp-138.

The protein belongs to the RNase H family. Monomer. It depends on Mg(2+) as a cofactor.

It localises to the cytoplasm. It carries out the reaction Endonucleolytic cleavage to 5'-phosphomonoester.. Functionally, endonuclease that specifically degrades the RNA of RNA-DNA hybrids. This chain is Ribonuclease H, found in Thermoanaerobacter pseudethanolicus (strain ATCC 33223 / 39E) (Clostridium thermohydrosulfuricum).